A 396-amino-acid polypeptide reads, in one-letter code: Probable sugar efflux transporter (396 aa).

At 1-14 the chain is on the cytoplasmic side; sequence MTINPVSRKVAWLR. The chain crosses the membrane as a helical span at residues 15–35; the sequence is VVTLAIAAFIFNTTEFVPVGL. Residues 36 to 49 are Periplasmic-facing; sequence LSDIAESFHMQTAQ. The helical transmembrane segment at 50-70 threads the bilayer; the sequence is VGIMLTIYAWVVAVMSLPFML. At 71–80 the chain is on the cytoplasmic side; it reads LTSQMERRKL. Residues 81 to 101 form a helical membrane-spanning segment; that stretch reads LIYLFVLFIASHVLSFLAWNF. Position 102 (threonine 102) is a topological domain, periplasmic. Residues 103-123 traverse the membrane as a helical segment; that stretch reads VLVISRIGIAFAHAIFWSITA. Residues 124 to 135 are Cytoplasmic-facing; the sequence is SLAIRLAPAGKR. A helical membrane pass occupies residues 136 to 156; that stretch reads AQALSLIATGTALAMVLGLPI. The Periplasmic segment spans residues 157-168; that stretch reads GRVVGQYFGWRT. A helical transmembrane segment spans residues 169-189; sequence TFFAIGMGALITLLCLIKLLP. At 190–208 the chain is on the cytoplasmic side; it reads KLPSEHSGSLKSLPLLFRR. A helical membrane pass occupies residues 209–229; it reads PALMSLYVLTVVVVTAHYTAY. The Periplasmic portion of the chain corresponds to 230-245; the sequence is SYIEPFVQNVAGLSAN. The helical transmembrane segment at 246-266 threads the bilayer; it reads FATVLLLILGGAGIIGSLVFG. Residues 267–274 are Cytoplasmic-facing; sequence KLGNRHAS. A helical transmembrane segment spans residues 275–295; it reads SLVSIAIALLVVCLLLLLPAA. Residues 296 to 300 are Periplasmic-facing; sequence ESEAH. A helical membrane pass occupies residues 301–321; that stretch reads LAILSIFWGIAIMVIGLGMQV. Residues 322–332 are Cytoplasmic-facing; it reads KVLALAPDATD. Residues 333 to 353 form a helical membrane-spanning segment; sequence VAMALFSGIFNIGIGAGALVG. Topologically, residues 354 to 363 are periplasmic; it reads NQVSLHWSMS. Residues 364–384 form a helical membrane-spanning segment; the sequence is AIGYIGAIPACAALVWAVLIF. At 385 to 396 the chain is on the cytoplasmic side; it reads RKWPVTLEEQPH.

It belongs to the major facilitator superfamily. SotB (TC 2.A.1.2) family.

The protein resides in the cell inner membrane. Its function is as follows. Involved in the efflux of sugars. The physiological role may be the reduction of the intracellular concentration of toxic sugars or sugar metabolites. This Salmonella typhimurium (strain LT2 / SGSC1412 / ATCC 700720) protein is Probable sugar efflux transporter.